The following is a 556-amino-acid chain: MTMLKDPSQKYRPFTPIALPDRTWPDKVIDRAPIWLSTDLRDGNQSLIEPMDAEKKMRFFKCLVAVGLKEIEVGFPSASQTDFDFVRELIEGGHIPDDVTIQVLTQARDDLIERTFESLKGAKRAIVHYYNACAPSFRKIVFNQDKAGVKAIAVAAGKTIKRLAAAQPDTQWGFEYSPEVFSSTETDFAVEVCNAVIEVFQPTPANKLILNLPATVECATPNNYADQIEWFGRHVDRRDSVLISVHTHNDRGTGVAASELAVMAGADRVEGCLFGNGERTGNVCLVTLALNLYTQGVDPQLDFSDIDAVRKVVEDCNQIPVHPRHPYAGDLVHTAFSGSHQDAIRKGFAQQKDDAVWEVPYLPIDPADIGRDYEAVIRVNSQSGKGGITFLLEQEYGISLPRRMQIEFSQVVQRETDRLGLEMTAAQIYQLLESEYLQASAPYALKGHRLQEENGTSAVDVEVISAGESHHWRGIGKGPLEALVAGLPVAVEIMDYSEHAIGAGTNAKAAAYIELRVNGGRALHGIGIDENLTTASFRALFSALNRALSQAESRAA.

Residues 33 to 307 enclose the Pyruvate carboxyltransferase domain; that stretch reads PIWLSTDLRD…DPQLDFSDID (275 aa). Residues aspartate 42, histidine 246, histidine 248, and asparagine 282 each contribute to the Mg(2+) site. Residues 439–556 form a regulatory domain region; the sequence is ASAPYALKGH…ALSQAESRAA (118 aa).

Belongs to the alpha-IPM synthase/homocitrate synthase family. LeuA type 2 subfamily. As to quaternary structure, homodimer. It depends on Mg(2+) as a cofactor.

The protein localises to the cytoplasm. The enzyme catalyses 3-methyl-2-oxobutanoate + acetyl-CoA + H2O = (2S)-2-isopropylmalate + CoA + H(+). The protein operates within amino-acid biosynthesis; L-leucine biosynthesis; L-leucine from 3-methyl-2-oxobutanoate: step 1/4. Functionally, catalyzes the condensation of the acetyl group of acetyl-CoA with 3-methyl-2-oxobutanoate (2-ketoisovalerate) to form 3-carboxy-3-hydroxy-4-methylpentanoate (2-isopropylmalate). In Ectopseudomonas mendocina (strain ymp) (Pseudomonas mendocina), this protein is 2-isopropylmalate synthase.